The chain runs to 234 residues: (5-formylfuran-3-yl)methyl phosphate synthase (234 aa).

K27 (schiff-base intermediate with substrate) is an active-site residue. The active-site Proton acceptor is the K85.

The protein belongs to the MfnB family.

It catalyses the reaction 2 D-glyceraldehyde 3-phosphate = 4-(hydroxymethyl)-2-furancarboxaldehyde phosphate + phosphate + 2 H2O. The protein operates within cofactor biosynthesis; methanofuran biosynthesis. In terms of biological role, catalyzes the formation of 4-(hydroxymethyl)-2-furancarboxaldehyde phosphate (4-HFC-P) from two molecules of glyceraldehyde-3-P (GA-3-P). This Methanosarcina acetivorans (strain ATCC 35395 / DSM 2834 / JCM 12185 / C2A) protein is (5-formylfuran-3-yl)methyl phosphate synthase.